The following is a 180-amino-acid chain: Putative protein 33K (180 aa).

Residues 31–108 (LEEAYKQLEK…AKAPRNYGTP (78 aa)) are disordered. Over residues 33–43 (EAYKQLEKELG) the composition is skewed to basic and acidic residues. Residues 60–78 (PLSEGELEEISEEEEEEGE) are compositionally biased toward acidic residues.

The protein is Putative protein 33K of Pantherophis guttatus (Corn snake).